The following is a 498-amino-acid chain: Glycerol kinase (498 aa).

Thr12 contacts ADP. Positions 12, 13, and 14 each coordinate ATP. Residue Thr12 coordinates sn-glycerol 3-phosphate. An ADP-binding site is contributed by Arg16. Positions 82, 83, 134, and 244 each coordinate sn-glycerol 3-phosphate. Glycerol is bound by residues Arg82, Glu83, Tyr134, Asp244, and Gln245. Thr266 and Gly310 together coordinate ADP. Thr266, Gly310, Gln314, and Gly411 together coordinate ATP. ADP is bound by residues Gly411 and Asn415.

Belongs to the FGGY kinase family.

The enzyme catalyses glycerol + ATP = sn-glycerol 3-phosphate + ADP + H(+). Its pathway is polyol metabolism; glycerol degradation via glycerol kinase pathway; sn-glycerol 3-phosphate from glycerol: step 1/1. Inhibited by fructose 1,6-bisphosphate (FBP). Key enzyme in the regulation of glycerol uptake and metabolism. Catalyzes the phosphorylation of glycerol to yield sn-glycerol 3-phosphate. The sequence is that of Glycerol kinase from Chloroflexus aurantiacus (strain ATCC 29364 / DSM 637 / Y-400-fl).